Reading from the N-terminus, the 162-residue chain is Zinc finger protein 593 homolog (162 aa).

Residues 59–83 (FYCVHCAKYFIDDTAMQAHFRTKVH) form a C2H2-type zinc finger. Positions 110-162 (VKPKKRAMETQPSKEDVVAGKRIRVEVVPEDTDATDSPSTSKTKRKKVEKMET) are disordered. Over residues 115–136 (RAMETQPSKEDVVAGKRIRVEV) the composition is skewed to basic and acidic residues. Positions 151 to 162 (KTKRKKVEKMET) are enriched in basic residues.

This sequence belongs to the ZNF593/BUD20 C2H2-type zinc-finger protein family. In terms of assembly, associates with pre-60S ribosomal particles; released from the pre-60S particle very early in the cytoplasm.

The protein localises to the nucleus. It is found in the cytoplasm. Involved in pre-60S ribosomal particles maturation by promoting the nuclear export of the 60S ribosome. The chain is Zinc finger protein 593 homolog from Drosophila melanogaster (Fruit fly).